We begin with the raw amino-acid sequence, 453 residues long: Tubulin delta chain (453 aa).

A GTP-binding site is contributed by 143-149; that stretch reads AGGTGSG.

It belongs to the tubulin family. As to quaternary structure, found in a complex with TEDC1, TEDC2, TUBE1 and TUBD1.

The protein localises to the nucleus. Its subcellular location is the cytoplasm. The protein resides in the cytoskeleton. It is found in the microtubule organizing center. It localises to the centrosome. The protein localises to the centriole. Its subcellular location is the cell projection. The protein resides in the cilium. Functionally, acts as a positive regulator of hedgehog signaling and regulates ciliary function. This Homo sapiens (Human) protein is Tubulin delta chain (TUBD1).